A 276-amino-acid polypeptide reads, in one-letter code: Outer membrane lipoprotein 2 (276 aa).

Positions 1–19 (MNFKKLLGVALVSALALTA) are cleaved as a signal peptide. C20 carries the N-palmitoyl cysteine lipid modification. C20 carries S-diacylglycerol cysteine lipidation.

Belongs to the NlpA lipoprotein family.

It localises to the cell outer membrane. The sequence is that of Outer membrane lipoprotein 2 (plpB) from Mannheimia haemolytica (Pasteurella haemolytica).